The chain runs to 240 residues: ATP-dependent dethiobiotin synthetase BioD (240 aa).

ATP is bound at residue 13–18 (EVGKTV). Residue Thr17 coordinates Mg(2+). The active site involves Lys38. Ser42 lines the substrate pocket. ATP-binding positions include Asp55, 116–119 (EGAG), 176–177 (ND), and 205–207 (PWL). 2 residues coordinate Mg(2+): Asp55 and Glu116.

It belongs to the dethiobiotin synthetase family. Homodimer. Requires Mg(2+) as cofactor.

The protein localises to the cytoplasm. The catalysed reaction is (7R,8S)-7,8-diammoniononanoate + CO2 + ATP = (4R,5S)-dethiobiotin + ADP + phosphate + 3 H(+). Its pathway is cofactor biosynthesis; biotin biosynthesis; biotin from 7,8-diaminononanoate: step 1/2. Its function is as follows. Catalyzes a mechanistically unusual reaction, the ATP-dependent insertion of CO2 between the N7 and N8 nitrogen atoms of 7,8-diaminopelargonic acid (DAPA, also called 7,8-diammoniononanoate) to form a ureido ring. This is ATP-dependent dethiobiotin synthetase BioD from Pseudescherichia vulneris (Escherichia vulneris).